A 354-amino-acid chain; its full sequence is NAD-dependent protein deacetylase hst2-2 (354 aa).

Residues 16 to 279 form the Deacetylase sirtuin-type domain; it reads QCQNQTTLDS…REVARHLGWD (264 aa). NAD(+) is bound by residues 43–63 and 126–129; these read GAGL…TGLY and QNID. His-146 serves as the catalytic Proton acceptor. Positions 154, 157, 178, and 183 each coordinate Zn(2+). NAD(+) contacts are provided by residues 220–222, 245–247, and Cys-265; these read GTS and NRE.

The protein belongs to the sirtuin family. Class I subfamily. Zn(2+) serves as cofactor.

Its subcellular location is the nucleus. It carries out the reaction N(6)-acetyl-L-lysyl-[protein] + NAD(+) + H2O = 2''-O-acetyl-ADP-D-ribose + nicotinamide + L-lysyl-[protein]. NAD-dependent histone deacetylase, which could function in telomeric silencing, cell cycle progression and chromosome stability. The sequence is that of NAD-dependent protein deacetylase hst2-2 from Emericella nidulans (strain FGSC A4 / ATCC 38163 / CBS 112.46 / NRRL 194 / M139) (Aspergillus nidulans).